The chain runs to 311 residues: Pyrimidine-specific ribonucleoside hydrolase RihA (311 aa).

His-240 is an active-site residue.

Belongs to the IUNH family. RihA subfamily.

Hydrolyzes with equal efficiency cytidine or uridine to ribose and cytosine or uracil, respectively. This chain is Pyrimidine-specific ribonucleoside hydrolase RihA, found in Escherichia coli (strain ATCC 8739 / DSM 1576 / NBRC 3972 / NCIMB 8545 / WDCM 00012 / Crooks).